Consider the following 155-residue polypeptide: Protein FAM162B (155 aa).

Residues V95–V114 traverse the membrane as a helical segment.

This sequence belongs to the UPF0389 family.

It localises to the membrane. The chain is Protein FAM162B (fam162b) from Danio rerio (Zebrafish).